A 156-amino-acid chain; its full sequence is Cytochrome c-type biogenesis protein CcmE 1 (156 aa).

The Cytoplasmic portion of the chain corresponds to 1–8 (MNATRKQR). The chain crosses the membrane as a helical; Signal-anchor for type II membrane protein span at residues 9 to 29 (LCLVIGVLAAAALAVTLIVFA). Over 30-156 (LQRNMSYLFT…ATAAPLTTPR (127 aa)) the chain is Periplasmic. Positions 123 and 127 each coordinate heme.

It belongs to the CcmE/CycJ family.

The protein resides in the cell inner membrane. Heme chaperone required for the biogenesis of c-type cytochromes. Transiently binds heme delivered by CcmC and transfers the heme to apo-cytochromes in a process facilitated by CcmF and CcmH. This is Cytochrome c-type biogenesis protein CcmE 1 from Xanthomonas oryzae pv. oryzae (strain MAFF 311018).